The sequence spans 203 residues: Acid phosphatase (203 aa).

The Tele-phosphohistidine intermediate role is filled by His13. Glu85 serves as the catalytic Proton donor/acceptor.

The protein belongs to the phosphoglycerate mutase family. In terms of assembly, homodimer.

It catalyses the reaction a phosphate monoester + H2O = an alcohol + phosphate. The catalysed reaction is beta-D-fructose 1,6-bisphosphate + H2O = beta-D-fructose 6-phosphate + phosphate. The protein operates within carbohydrate biosynthesis; gluconeogenesis. In contrast to classical FBPases, is resistant to inhibition by lithium. Functionally, phosphatase with a broad specificity. Can dephosphorylate a variety of substrates including phosphorylated sugars like fructose-6-phosphate (F6P). Is able to function in vivo as a fructose-1,6-bisphosphatase (FBPase) and to maintain gluconeogenesis when the classical FBPase GlpX is absent. Shows negligible phosphoglycerate mutase activity. Has no phosphatase activity against 3-phosphoglycerate, 2,3-bisphosphoglycerate, or hydrophobic substrates such as alpha-napthyl phosphate. The protein is Acid phosphatase of Mycobacterium tuberculosis (strain ATCC 25618 / H37Rv).